A 307-amino-acid polypeptide reads, in one-letter code: Pseudouridine-5'-phosphate glycosidase (307 aa).

The active-site Proton donor is E25. The substrate site is built by K86 and V106. D138 contacts Mn(2+). S140 to D142 contributes to the substrate binding site. The Nucleophile role is filled by K159.

The protein belongs to the pseudouridine-5'-phosphate glycosidase family. In terms of assembly, homotrimer. Requires Mn(2+) as cofactor.

The enzyme catalyses D-ribose 5-phosphate + uracil = psi-UMP + H2O. Catalyzes the reversible cleavage of pseudouridine 5'-phosphate (PsiMP) to ribose 5-phosphate and uracil. Functions biologically in the cleavage direction, as part of a pseudouridine degradation pathway. The polypeptide is Pseudouridine-5'-phosphate glycosidase (Caldanaerobacter subterraneus subsp. tengcongensis (strain DSM 15242 / JCM 11007 / NBRC 100824 / MB4) (Thermoanaerobacter tengcongensis)).